Here is a 416-residue protein sequence, read N- to C-terminus: Methylthioribose-1-phosphate isomerase (416 aa).

Residue Asp280 is the Proton donor of the active site.

The protein belongs to the eIF-2B alpha/beta/delta subunits family. MtnA subfamily.

It localises to the cytoplasm. The protein localises to the nucleus. The enzyme catalyses 5-(methylsulfanyl)-alpha-D-ribose 1-phosphate = 5-(methylsulfanyl)-D-ribulose 1-phosphate. Its pathway is amino-acid biosynthesis; L-methionine biosynthesis via salvage pathway; L-methionine from S-methyl-5-thio-alpha-D-ribose 1-phosphate: step 1/6. Its function is as follows. Catalyzes the interconversion of methylthioribose-1-phosphate (MTR-1-P) into methylthioribulose-1-phosphate (MTRu-1-P). The polypeptide is Methylthioribose-1-phosphate isomerase (Candida albicans (strain SC5314 / ATCC MYA-2876) (Yeast)).